The chain runs to 252 residues: Probable anguibactin biosynthesis thioesterase AngT (252 aa).

Active-site residues include Ser92 and His229.

It belongs to the thioesterase family.

Its pathway is siderophore biosynthesis; anguibactin biosynthesis. Its function is as follows. Probable thioesterase. Involved in anguibactin production, but is not essential for virulence or iron transport gene expression. This chain is Probable anguibactin biosynthesis thioesterase AngT (angT), found in Vibrio anguillarum (strain ATCC 68554 / 775) (Listonella anguillarum).